The following is a 421-amino-acid chain: Serine--tRNA ligase (421 aa).

225-227 (TAE) lines the L-serine pocket. Residues 256–258 (RSE) and valine 272 contribute to the ATP site. Residue glutamate 279 coordinates L-serine. Residue 345-348 (ETHS) coordinates ATP. Position 380 (threonine 380) interacts with L-serine.

The protein belongs to the class-II aminoacyl-tRNA synthetase family. Type-1 seryl-tRNA synthetase subfamily. In terms of assembly, homodimer. A single tRNA molecule binds across the dimer.

The protein resides in the cytoplasm. The catalysed reaction is tRNA(Ser) + L-serine + ATP = L-seryl-tRNA(Ser) + AMP + diphosphate + H(+). The enzyme catalyses tRNA(Sec) + L-serine + ATP = L-seryl-tRNA(Sec) + AMP + diphosphate + H(+). The protein operates within aminoacyl-tRNA biosynthesis; selenocysteinyl-tRNA(Sec) biosynthesis; L-seryl-tRNA(Sec) from L-serine and tRNA(Sec): step 1/1. Functionally, catalyzes the attachment of serine to tRNA(Ser). Is also probably able to aminoacylate tRNA(Sec) with serine, to form the misacylated tRNA L-seryl-tRNA(Sec), which will be further converted into selenocysteinyl-tRNA(Sec). The protein is Serine--tRNA ligase (serS) of Thermus thermophilus (strain ATCC BAA-163 / DSM 7039 / HB27).